The chain runs to 3746 residues: MGPSNPAMAYFKPSTRDTMDPCSGNAADGSIRVRFRGGIERWKECVNQVPERCDLSGLTTDSTRYQLASTGFGDASAAYQERLMTVPVDVHAALQELCLERRVSVGSVINFSVHQMLKGFGNGTHTITASLHREQNLQNSSPSWVVSPTIVTHENRDGWSVAQAVESIEAGRGSEKESVTAIDSGSSLVKMGLFDLLVSFVDADDARIPCFDFPLAVIVRECDANLSLTLRFSDCLFNEETICNFTDALNILLAEAVIGRVTPVADIELLSAEQKQQLEEWNNTDGEYPSSKRLHHLIEEVVERHEDKIAVVCDERELTYGELNAQGNSLARYLRSIGILPEQLVALFLDKSEKLIVTILGVWKSGAAYVPIDPTYPDERVRFVLDDTKARAIIASNQHVERLQREVIGDRNLCIIRLEPLLASLAQDSSKFPAHNLDDLPLTSQQLAYVTYTSGTTGFPKGIFKQHTNVVNSITDLSARYGVAGQHHEAILLFSACVFEPFVRQTLMALVNGHLLAVINDVEKYDADTLLPFIRRHSITYLNGTASVLQEYDFSDCPSLNRIILVGENLTEARYLALRQRFKNRILNEYGFTESAFVTALKIFDPESTRKDTSLGRPVRNVKCYILNPSLKRVPIGATGELHIGGLGISKGYLNRPELTPHRFIPNPFQTDCEKQLGINSLMYKTGDLARWLPNGEVEYLGRADFQIKLRGIRIEPGEIETMLAMYPRVRTSLVVSKKLRNGPEETTNEHLVGYYVCDSASVSEADLLSFLEKKLPRYMIPTRLVQLSQIPVNVNGKADLRALPAVDISNSTEVRSDLRGDTEIALGEIWADVLGARQRSVSRNDNFFRLGGHSITCIQLIARIRQRLSVSISVEDVFATRTLERMADLLQNKQQEKCDKPHEAPTELLEENAATDNIYLANSLQQGFVYHYLKSMEQSDAYVMQSVLRYNTTLSPDLFQRAWKHAQQSFPALRLRFSWEKEVFQLLDQDPPLDWRFLYFTDVAAGAVEDRKLEDLRRQDLTERFKLDVGRLFRVYLIKHSENRFTCLFSCHHAILDGWSLPLLFEKVHETYLQLLHGDNLTSSMDDPYTRTQRYLHAHREDHLDFWAGVVQKINERCDMNALLNERSRYKVQLADYDQVQEQRQLTIALSGDAWLADLRQTCSAQGITLHSILQFVWHAVLHAYGGGTHTITGTTISGRNLPILGIERAVGPYINTLPLVLDHSTFKDKTIMEAIEDVQAKVNVMNSRGNVELGRLHKTDLKHGLFDSLFVLENYPNLDKSRTLEHQTELGYSIEGGTEKLNYPLAVIAREVETTGGFTVSICYASELFEEVMISELLHMVQDTLMQVARGLNEPVGSLEYLSSIQLEQLAAWNATEAEFPDTTLHEMFENEASQKPDKIAVVYEETSLTYRELNERANRMAHQLRSDVSPNPNEVIALVMDKSEHMIVNILAVWKSGGAYVPIDPGYPNDRIQYILEDTQALAVIADSCYLPRIKGMAASGTLLYPSVLPANPDSKWSVSNPSPLSRSTDLAYIIYTSGTTGRPKGVTVEHHGVVNLQVSLSKVFGLRDTDDEVILSFSNYVFDHFVEQMTDAILNGQTLLVLNDGMRGDKERLYRYIEKNRVTYLSGTPSVVSMYEFSRFKDHLRRVDCVGEAFSEPVFDKIRETFHGLVINGYGPTEVSITTHKRLYPFPERRMDKSIGQQVHNSTSYVLNEDMKRTPIGSVGELYLGGEGVVRGYHNRADVTAERFIPNPFQSEEDKREGRNSRLYKTGDLVRWIPGSSGEVEYLGRNDFQVKIRGLRIELGEIEAILSSYHGIKQSVVIAKDCREGAQKFLVGYYVADAALPSAAIRRFMQSRLPGYMVPSRLILVSKFPVTPSGKLDTKALPPAEEESEIDVVPPRSEIERSLCDIWAELLEMHPEEIGIYSDFFSLGGDSLKSTKLSFMIHESFNRAVSVSALFCHRTVEAQTHLILNDAADVHEITPIDCNDTQMIPVSRAQERLLFIHEFENGSNAYNIDAAFELPGSVDASLLEQALRGNLARHEALRTLLVKDHATGIYLQKVLSPDEAQGMFSVNVDTAKQVERLDQEIASLSQHVFRLDDELPWEARILKLESGGLYLILAFHHTCFDAWSLKVFEQELRALYAALQKTKSAANLPALKAQYKEYALYHRRQLSGDRMRNLSDFWLRKLIGLEPLQLITDRPRPVQFKYDGDDLSIELSKKETENLRGVAKRCKSSLYVVLVSVYCVMLASYANQSDVSVGIPVSHRTHPQFQSVIGFFVNLVVLRVDISQSAICGLIRRVMKELVDAQLHQDMPFQEVTKLLQVDNDPSRHPLVQNVFNFESRANGEHDARSEDEGSLAFNQYRPVQPVDSVAKFDLNATVTELESGLRVNFNYATSLFNKSTIQGFLHTYEYLLRQLSELSAEGINEDTQLSLVRPTENGDLHLPLAQSPLATTAEEQKVASLNQAFEREAFLAAEKIAVVQGDRALSYADLNGQANQLARYIQSVSCIGADDGIALMLEKSIDTIICILAIWKAGAAYVPLDPTYPPGRVQLILEEIKAKAVLVHSSHASKCERHGAKVIAVDSPAIETAVSQQSAADLPTIASLGNLAYIIFTSGTSGKPKGVLVEQKAVLLLRDALRERYFGRDCTKHHGVLFLSNYVFDFSVEQLVLSVLSGHKLIVPPAEFVADDEFYRMASTHGLSYLSGTPSLLQKIDLARLDHLQVVTAAGEELHATQYEKMRRRFNGPIYNAYGVTETTVYNIIAEFTTNSIFENALREVLPGTRAYVLNAALQPVPFDAVGELYLAGDSVTRGYLNQPLLTDQRFIPNPFCKEEDIAMGRFARLYKTGDLVRSRFNRQQQPQLEYLGRGDLQIKMRGYRIEISEVQNVLTSSPGVREGAVVAKYENNDTYSRTAHSLVGYYTTDNETVSEADILTFMKARLPTYMVPSHLCCLEGALPVTINGKLDVRRLPEIINDSAQSSYSPPRNIIEAKMCRLWESALGMERCGIDDDLFKLGGDSITSLHLVAQIHNQVGCKITVRDIFEHRTARALHDHVFMKDSDRSNVTQFRTEQGPVIGEAPLLPIQDWFLSKALQHPMYWNHTFYVRTPELDVDSLSAAVRDLQQYHDVFRMRLKREEVGFVQSFAEDFSPAQLRVLNVKDVDGSAAVNEILDGWQSGFNLENGPIGSIGYLHGYEDRSARVWFSVHHMAIDTVSWQILVRDLQTLYRNGSLGSKGSSFRQWAEAIQNYKASDSERNHWNKLVMETASSISALPTSTGSRVRLSRSLSPEKTASLIQGGIDRQDVSVYDSLLTSVGLALQHIAPTGPSMVTIEGHGREEVDQTLDVSRTMGWFTTMYPFEIPRLSTENIVQGVVAVSERFRQVPARGVGYGTLYGYTQHPLPQVTVNYLGQLARKQSKPKEWVLAVGDNEFEYGLMTSPEDKDRSSSAVDVTAVCIDGTMIIDVDSAWSLEESEQFISSIEEGLNKILDGRASQQTSRFPDVPQPAETYTPYFEYLEPPRQGPTLFLLPPGEGGAESYFNNIVKRLRQTNMVVFNNYYLHSKRLRTFEELAEMYLDQVRGIQPHGPYHFIGWSFGGILAMEMSRRLVASDEKIGFLGIIDTYFNVRGATRTIGLGDTEILDPIHHIYNPDPANFQRLPSATDRIVLFKAMRPNNKYESENQRRLYEYYDGTRLNGLDSLLPSDSDVQLVPLTDDTHFSWVGNPQQVEQMCATIKEHLARY.

Residues 299-711 are adenylation (A) domain 1; the sequence is EEVVERHEDK…GRADFQIKLR (413 aa). Residues 818–895 enclose the Carrier 1 domain; sequence DLRGDTEIAL…RMADLLQNKQ (78 aa). S855 carries the O-(pantetheine 4'-phosphoryl)serine modification. The interval 918–1372 is condensation (C) domain 1; it reads NIYLANSLQQ…YLSSIQLEQL (455 aa). The segment at 1391–1801 is adenylation (A) domain 2; that stretch reads FENEASQKPD…GRNDFQVKIR (411 aa). The 78-residue stretch at 1902–1979 folds into the Carrier 2 domain; that stretch reads PPRSEIERSL…AQTHLILNDA (78 aa). S1939 bears the O-(pantetheine 4'-phosphoryl)serine mark. The segment at 1994 to 2434 is condensation (C) domain 2; it reads QMIPVSRAQE…SELSAEGINE (441 aa). Positions 2478-2883 are adenylation (A) domain 3; that stretch reads AFLAAEKIAV…GRGDLQIKMR (406 aa). The Carrier 3 domain maps to 2991–3066; the sequence is PPRNIIEAKM…ALHDHVFMKD (76 aa). S3026 carries the post-translational modification O-(pantetheine 4'-phosphoryl)serine. The tract at residues 3084–3500 is epimerase (E) domain; sequence GEAPLLPIQD…NKILDGRASQ (417 aa). The tract at residues 3530 to 3732 is thioesterase (TE) domain; sequence TLFLLPPGEG…FSWVGNPQQV (203 aa).

Belongs to the NRP synthetase family. Requires pantetheine 4'-phosphate as cofactor. Mg(2+) is required as a cofactor.

It is found in the cytoplasm. The protein resides in the cytosol. The protein localises to the vacuole membrane. It carries out the reaction L-2-aminoadipate + L-valine + L-cysteine + 3 ATP + H2O = N-[(5S)-5-amino-5-carboxypentanoyl]-L-cysteinyl-D-valine + 3 AMP + 3 diphosphate + 3 H(+). The protein operates within antibiotic biosynthesis; penicillin G biosynthesis; penicillin G from L-alpha-aminoadipate and L-cysteine and L-valine: step 1/3. Its function is as follows. Nonribosomal peptide synthetase; part of the gene cluster that mediates the biosynthesis of penicillin, the world's most important antibiotic. The trimodular NRPS acvA produces the tripeptide N-[(5S)-5-amino-5-carboxypentanoyl]-L-cysteinyl-D-valine (LLD-ACV or ACV) via condensation of the 3 residues L-2-aminoadipate, L-cysteine and L-valine. The precursor amino acids for penicillin biosynthesis are withdrawn from the vacuolar amino acid pool by the MFS-type transporter penV. Each of the constituent amino acids of the tripeptide ACV are activated as aminoacyl-adenylates with peptide bonds formed through the participation of amino acid thioester intermediates. The penicillin biosynthesis occurs via 3 enzymatic steps, the first corresponding to the production of the tripeptide N-[(5S)-5-amino-5-carboxypentanoyl]-L-cysteinyl-D-valine (LLD-ACV or ACV) by the NRPS acvA. The tripeptide ACV is then cyclized to isopenicillin N (IPN) by the isopenicillin N synthase ipnA that forms the beta-lactam nucleus. Finally, the alpha-aminoadipyl side chain is exchanged for phenylacetic acid by the isopenicillin N acyltransferase aatA to yield penicillin in the peroxisomal matrix. This is N-(5-amino-5-carboxypentanoyl)-L-cysteinyl-D-valine synthase from Penicillium chrysogenum (Penicillium notatum).